We begin with the raw amino-acid sequence, 196 residues long: ATP-dependent Clp protease proteolytic subunit (196 aa).

The active-site Nucleophile is Ser101. His126 is an active-site residue.

The protein belongs to the peptidase S14 family. In terms of assembly, component of the chloroplastic Clp protease core complex.

It is found in the plastid. The protein resides in the chloroplast stroma. The catalysed reaction is Hydrolysis of proteins to small peptides in the presence of ATP and magnesium. alpha-casein is the usual test substrate. In the absence of ATP, only oligopeptides shorter than five residues are hydrolyzed (such as succinyl-Leu-Tyr-|-NHMec, and Leu-Tyr-Leu-|-Tyr-Trp, in which cleavage of the -Tyr-|-Leu- and -Tyr-|-Trp bonds also occurs).. Its function is as follows. Cleaves peptides in various proteins in a process that requires ATP hydrolysis. Has a chymotrypsin-like activity. Plays a major role in the degradation of misfolded proteins. The chain is ATP-dependent Clp protease proteolytic subunit from Panax ginseng (Korean ginseng).